A 464-amino-acid chain; its full sequence is Anthocyanidin 3-O-galactosyltransferase 3GT1 (464 aa).

The an anthocyanidin site is built by S19 and H21. The active-site Proton acceptor is the H21. Residue N38 is glycosylated (N-linked (GlcNAc...) asparagine). The Charge relay role is filled by D121. H152 serves as a coordination point for an anthocyanidin. The UDP-alpha-D-glucose site is built by A342, Q344, H359, W362, N363, S364, and E367. G382 is a binding site for an anthocyanidin. Residue D383 coordinates UDP-alpha-D-glucose.

The protein belongs to the UDP-glycosyltransferase family. Monomer. As to expression, mostly expressed in leaves and flowers and, to a lower extent, in roots. In flowers, mainly observed in petals, toruses and scapes, and at lower levels in pistils and stamens.

The catalysed reaction is cyanidin + UDP-alpha-D-galactose = cyanidin 3-O-beta-D-galactoside + UDP + H(+). It carries out the reaction cyanidin + UDP-alpha-D-glucose = cyanidin 3-O-beta-D-glucoside + UDP + H(+). It catalyses the reaction delphinidin + UDP-alpha-D-glucose = delphinidin 3-O-beta-D-glucoside + UDP. The enzyme catalyses malvidin + UDP-alpha-D-glucose = malvidin 3-O-beta-D-glucoside + UDP. The catalysed reaction is delphinidin + UDP-alpha-D-galactose = delphinidin 3-O-beta-D-galactoside + UDP + H(+). It carries out the reaction pelargonidin + UDP-alpha-D-galactose = pelargonidin 3-O-beta-D-galactoside betaine + UDP. It catalyses the reaction peonidin + UDP-alpha-D-galactose = peonidin 3-O-beta-D-galactoside + UDP. The enzyme catalyses malvidin + UDP-alpha-D-galactose = malvidin 3-O-beta-D-galactoside + UDP + H(+). The catalysed reaction is petunidin + UDP-alpha-D-galactose = petunidin 3-O-beta-D-galactoside + UDP. It carries out the reaction an anthocyanidin + UDP-alpha-D-glucose + H(+) = an anthocyanidin 3-O-beta-D-glucoside + UDP. It catalyses the reaction an anthocyanidin + UDP-alpha-D-galactose = an anthocyanidin 3-O-beta-D-galactoside + UDP. It participates in pigment biosynthesis; anthocyanin biosynthesis. Its function is as follows. Flavonoid 3-O-glycosyltransferase involved in the biosynthesis of anthocyanins conferring flower red/pink colors, mainly anthocyanidin 3-O-glycosides. Catalyzes the addition of UDP-sugar to the 3-OH of anthocyanidin, with a preference for UDP-galactose (UDP-Gal) as sugar donor and cyanidin as substrate; able to use delphinidin, pelargonidin, peonidin, malvidin and petunidin as substrates in the presence of UDP-Gal. Can also use UDP-glucose (UDP-Glu) as sugar donor with delphinidin, cyanidin and malvidin as substrates, but not active on pelargonidin, peonidin and petunidin. This chain is Anthocyanidin 3-O-galactosyltransferase 3GT1, found in Rhododendron delavayi (Rhododendron).